Reading from the N-terminus, the 166-residue chain is NAD(P)H-quinone oxidoreductase subunit I, chloroplastic (166 aa).

2 4Fe-4S ferredoxin-type domains span residues 55-84 and 95-124; these read GRIH…VDWK and LNYS…MTEE. [4Fe-4S] cluster contacts are provided by Cys-64, Cys-67, Cys-70, Cys-74, Cys-104, Cys-107, Cys-110, and Cys-114.

The protein belongs to the complex I 23 kDa subunit family. As to quaternary structure, NDH is composed of at least 16 different subunits, 5 of which are encoded in the nucleus. [4Fe-4S] cluster is required as a cofactor.

It is found in the plastid. The protein localises to the chloroplast thylakoid membrane. It catalyses the reaction a plastoquinone + NADH + (n+1) H(+)(in) = a plastoquinol + NAD(+) + n H(+)(out). The enzyme catalyses a plastoquinone + NADPH + (n+1) H(+)(in) = a plastoquinol + NADP(+) + n H(+)(out). Functionally, NDH shuttles electrons from NAD(P)H:plastoquinone, via FMN and iron-sulfur (Fe-S) centers, to quinones in the photosynthetic chain and possibly in a chloroplast respiratory chain. The immediate electron acceptor for the enzyme in this species is believed to be plastoquinone. Couples the redox reaction to proton translocation, and thus conserves the redox energy in a proton gradient. The chain is NAD(P)H-quinone oxidoreductase subunit I, chloroplastic from Chamaechaenactis scaposa (Fullstem).